The sequence spans 614 residues: ATP-dependent rRNA helicase SPB4 (614 aa).

The Q motif motif lies at 10-38 (WSVLKCDLHPWIKEAIKSLGYPTMTPVQA). The Helicase ATP-binding domain maps to 41–233 (IPLFSGNKDV…RTGMANPVKI (193 aa)). Residue 54–61 (AVTGSGKT) coordinates ATP. The short motif at 181–184 (DEAD) is the DEAD box element. The Helicase C-terminal domain maps to 260–431 (KISALIALIK…KFQKKFRKYM (172 aa)). A coiled-coil region spans residues 510–581 (EYADKQKEES…IEKQLMDDSS (72 aa)). The segment covering 514 to 529 (KQKEESRKKNLEEDKA) has biased composition (basic and acidic residues). The tract at residues 514–614 (KQKEESRKKN…DSMQGSFDDL (101 aa)) is disordered. The span at 530–541 (RKVHDAKKRKEL) shows a compositional bias: basic residues. Basic and acidic residues-rich tracts occupy residues 551-563 (KTDK…ERRE) and 584-595 (EETKVDWKEMVK). Positions 604–614 (SDSMQGSFDDL) are enriched in polar residues.

The protein belongs to the DEAD box helicase family. DDX55/SPB4 subfamily. As to quaternary structure, component of pre-60S ribosomal complexes.

It is found in the nucleus. The protein resides in the nucleolus. It catalyses the reaction ATP + H2O = ADP + phosphate + H(+). ATP-binding RNA helicase involved in the biogenesis of 60S ribosomal subunits. Binds 90S pre-ribosomal particles and dissociates from pre-60S ribosomal particles after processing of 27SB pre-rRNA. Required for the normal formation of 18S rRNA through the processing of pre-rRNAs at sites A0, A1 and A2, and the normal formation of 25S and 5.8S rRNAs through the processing of pre-rRNAs at sites C1 and C2. The chain is ATP-dependent rRNA helicase SPB4 from Debaryomyces hansenii (strain ATCC 36239 / CBS 767 / BCRC 21394 / JCM 1990 / NBRC 0083 / IGC 2968) (Yeast).